A 366-amino-acid polypeptide reads, in one-letter code: Glycerol-3-phosphate dehydrogenase [NAD(+)], glycosomal (366 aa).

NAD(+)-binding positions include 22 to 27 (GSGAFG), F97, K125, and A157. K125 contributes to the substrate binding site. The Proton acceptor role is filled by K210. Residues R274, V298, and E300 each coordinate NAD(+). 274–275 (RN) contacts substrate. The Microbody targeting signal motif lies at 364-366 (SKL).

This sequence belongs to the NAD-dependent glycerol-3-phosphate dehydrogenase family. In terms of assembly, homodimer.

Its subcellular location is the glycosome. It catalyses the reaction sn-glycerol 3-phosphate + NAD(+) = dihydroxyacetone phosphate + NADH + H(+). The chain is Glycerol-3-phosphate dehydrogenase [NAD(+)], glycosomal (GPD) from Leishmania mexicana.